We begin with the raw amino-acid sequence, 448 residues long: Argininosuccinate synthase (448 aa).

ATP contacts are provided by residues 17-25 (AFSGGLDTS) and Ala43. Residue Tyr99 participates in L-citrulline binding. Positions 129 and 131 each coordinate ATP. Residues Thr131, Asn135, and Asp136 each coordinate L-aspartate. Asn135 serves as a coordination point for L-citrulline. Asp136 lines the ATP pocket. The L-citrulline site is built by Arg139 and Ser192. Asp194 serves as a coordination point for ATP. Residues Thr201, Glu203, and Glu280 each coordinate L-citrulline.

This sequence belongs to the argininosuccinate synthase family. Type 2 subfamily. In terms of assembly, homotetramer.

The protein resides in the cytoplasm. The enzyme catalyses L-citrulline + L-aspartate + ATP = 2-(N(omega)-L-arginino)succinate + AMP + diphosphate + H(+). The protein operates within amino-acid biosynthesis; L-arginine biosynthesis; L-arginine from L-ornithine and carbamoyl phosphate: step 2/3. The protein is Argininosuccinate synthase of Pectobacterium carotovorum subsp. carotovorum (strain PC1).